The chain runs to 364 residues: Aminomethyltransferase (364 aa).

Belongs to the GcvT family. The glycine cleavage system is composed of four proteins: P, T, L and H.

The catalysed reaction is N(6)-[(R)-S(8)-aminomethyldihydrolipoyl]-L-lysyl-[protein] + (6S)-5,6,7,8-tetrahydrofolate = N(6)-[(R)-dihydrolipoyl]-L-lysyl-[protein] + (6R)-5,10-methylene-5,6,7,8-tetrahydrofolate + NH4(+). Functionally, the glycine cleavage system catalyzes the degradation of glycine. The sequence is that of Aminomethyltransferase from Escherichia coli (strain SMS-3-5 / SECEC).